The primary structure comprises 660 residues: Rhamnogalacturonate lyase B (660 aa).

The N-terminal stretch at 1–18 (MRLGVCFSLAAAASVARA) is a signal peptide. N-linked (GlcNAc...) asparagine glycans are attached at residues Asn-25, Asn-109, Asn-142, and Asn-284. Residues 446–466 (RLGTPDKSSGEFRHGAARDPT) are disordered. The span at 453–466 (SSGEFRHGAARDPT) shows a compositional bias: basic and acidic residues. Asn-524, Asn-566, and Asn-635 each carry an N-linked (GlcNAc...) asparagine glycan.

It belongs to the polysaccharide lyase 4 family.

It localises to the secreted. The enzyme catalyses Endotype eliminative cleavage of L-alpha-rhamnopyranosyl-(1-&gt;4)-alpha-D-galactopyranosyluronic acid bonds of rhamnogalacturonan I domains in ramified hairy regions of pectin leaving L-rhamnopyranose at the reducing end and 4-deoxy-4,5-unsaturated D-galactopyranosyluronic acid at the non-reducing end.. Its function is as follows. Pectinolytic enzymes consist of four classes of enzymes: pectin lyase, polygalacturonase, pectin methylesterase and rhamnogalacturonase. Degrades the rhamnogalacturonan I (RG-I) backbone of pectin. Active against linseed rhamnogalacturonan. The sequence is that of Rhamnogalacturonate lyase B (rglB) from Emericella nidulans (strain FGSC A4 / ATCC 38163 / CBS 112.46 / NRRL 194 / M139) (Aspergillus nidulans).